Consider the following 148-residue polypeptide: Hemoglobin subunit beta (148 aa).

The region spanning X3–H148 is the Globin domain. Residues H64 and H93 each contribute to the heme b site.

The protein belongs to the globin family. As to quaternary structure, heterotetramer of two alpha chains and two beta chains. Red blood cells.

Involved in oxygen transport from gills to the various peripheral tissues. The chain is Hemoglobin subunit beta (hbb) from Silurus asotus (Amur catfish).